The chain runs to 503 residues: Maturase K (503 aa).

This sequence belongs to the intron maturase 2 family. MatK subfamily.

The protein localises to the plastid. Its subcellular location is the chloroplast. Functionally, usually encoded in the trnK tRNA gene intron. Probably assists in splicing its own and other chloroplast group II introns. In Diospyros virginiana (American persimmon), this protein is Maturase K.